A 234-amino-acid polypeptide reads, in one-letter code: Large ribosomal subunit protein uL1 (234 aa).

It belongs to the universal ribosomal protein uL1 family. As to quaternary structure, part of the 50S ribosomal subunit.

Binds directly to 23S rRNA. The L1 stalk is quite mobile in the ribosome, and is involved in E site tRNA release. Its function is as follows. Protein L1 is also a translational repressor protein, it controls the translation of the L11 operon by binding to its mRNA. The protein is Large ribosomal subunit protein uL1 of Pectobacterium atrosepticum (strain SCRI 1043 / ATCC BAA-672) (Erwinia carotovora subsp. atroseptica).